The primary structure comprises 155 residues: Isotocin-neurophysin IT 1 (155 aa).

The first 19 residues, 1–19 (MTGTAISVCLLFLLSVCSA), serve as a signal peptide directing secretion. A disulfide bridge connects residues cysteine 20 and cysteine 25. Glycine 28 is subject to Glycine amide. Intrachain disulfides connect cysteine 41-cysteine 85, cysteine 44-cysteine 58, cysteine 52-cysteine 75, cysteine 59-cysteine 65, cysteine 92-cysteine 105, cysteine 99-cysteine 117, and cysteine 106-cysteine 111.

This sequence belongs to the vasopressin/oxytocin family. Post-translationally, seven disulfide bonds are present in neurophysin.

Isotocin causes contraction of smooth muscles. The sequence is that of Isotocin-neurophysin IT 1 from Takifugu rubripes (Japanese pufferfish).